A 41-amino-acid polypeptide reads, in one-letter code: Alpha-1B-glycoprotein (41 aa).

The N-linked (GlcNAc...) asparagine glycan is linked to asparagine 23.

Interacts with CRISP3. Post-translationally, glycosylated. As to expression, plasma.

Its subcellular location is the secreted. This Equus caballus (Horse) protein is Alpha-1B-glycoprotein (A1BG).